The following is a 291-amino-acid chain: ATP synthase gamma chain (291 aa).

It belongs to the ATPase gamma chain family. As to quaternary structure, F-type ATPases have 2 components, CF(1) - the catalytic core - and CF(0) - the membrane proton channel. CF(1) has five subunits: alpha(3), beta(3), gamma(1), delta(1), epsilon(1). CF(0) has three main subunits: a, b and c.

It localises to the cell membrane. In terms of biological role, produces ATP from ADP in the presence of a proton gradient across the membrane. The gamma chain is believed to be important in regulating ATPase activity and the flow of protons through the CF(0) complex. In Streptococcus uberis (strain ATCC BAA-854 / 0140J), this protein is ATP synthase gamma chain.